We begin with the raw amino-acid sequence, 187 residues long: Calmodulin-like protein 1 (187 aa).

N-acetylalanine is present on A2. 4 EF-hand domains span residues 8–43 (EQIV…LGQN), 44–79 (PTEA…KLRD), 81–116 (DSEE…IGER), and 117–152 (LTDE…KKRR). Positions 21, 23, 25, 27, 32, 57, 59, 61, 63, 68, 94, 96, 98, 105, 130, 132, 134, 136, and 141 each coordinate Ca(2+). Positions 153–187 (KRIEEKREHDGGSRTKSAGPSAAPASKRGQKCVIL) are disordered. Residues 154–165 (RIEEKREHDGGS) are compositionally biased toward basic and acidic residues. Residues 169–178 (SAGPSAAPAS) are compositionally biased toward low complexity. The residue at position 184 (C184) is a Cysteine methyl ester. C184 carries S-farnesyl cysteine lipidation. The propeptide at 185 to 187 (VIL) is removed in mature form.

Belongs to the calmodulin family. As to expression, expressed in roots, etiolated shoots and flowers.

The protein localises to the membrane. Calcium-binding protein that binds and activates CAMK1, a calcium/calmodulin-dependent kinase. In Oryza sativa subsp. indica (Rice), this protein is Calmodulin-like protein 1 (CML1).